The chain runs to 20 residues: Conotoxin PnMLKM-D0211 (20 aa).

Residues 1–3 constitute a propeptide that is removed on maturation; that stretch reads VKR. Intrachain disulfides connect Cys4/Cys18, Cys5/Cys14, and Cys10/Cys17. Pro16 is subject to 4-hydroxyproline. Trp19 is subject to Tryptophan amide.

Belongs to the conotoxin M superfamily. Expressed by the venom duct.

The protein localises to the secreted. The sequence is that of Conotoxin PnMLKM-D0211 from Conus pennaceus (Feathered cone).